A 102-amino-acid chain; its full sequence is ATP-dependent Clp protease adapter protein ClpS (102 aa).

Belongs to the ClpS family. Binds to the N-terminal domain of the chaperone ClpA.

Functionally, involved in the modulation of the specificity of the ClpAP-mediated ATP-dependent protein degradation. The chain is ATP-dependent Clp protease adapter protein ClpS from Aromatoleum aromaticum (strain DSM 19018 / LMG 30748 / EbN1) (Azoarcus sp. (strain EbN1)).